The chain runs to 144 residues: 3-hydroxyacyl-[acyl-carrier-protein] dehydratase FabZ (144 aa).

H47 is an active-site residue.

It belongs to the thioester dehydratase family. FabZ subfamily.

It localises to the cytoplasm. The enzyme catalyses a (3R)-hydroxyacyl-[ACP] = a (2E)-enoyl-[ACP] + H2O. Involved in unsaturated fatty acids biosynthesis. Catalyzes the dehydration of short chain beta-hydroxyacyl-ACPs and long chain saturated and unsaturated beta-hydroxyacyl-ACPs. The polypeptide is 3-hydroxyacyl-[acyl-carrier-protein] dehydratase FabZ (Dechloromonas aromatica (strain RCB)).